A 130-amino-acid chain; its full sequence is MKDWLDEIHWNSDGLVPAIAQDHKTGRVLMMAWMNREALSLTAAENRAIYWSRSRGKLWRKGEESGHVQKLHELRLDCDADVIILMVEQIGGIACHTGRESCFYRVYEKSGWKTVDPVLKDPDAIYPAGH.

Residue Asp-77 participates in Mg(2+) binding. A Zn(2+)-binding site is contributed by Cys-78. The Mg(2+) site is built by Asp-79 and Asp-81. The Zn(2+) site is built by Cys-95 and Cys-102.

Belongs to the PRA-CH family. Homodimer. Requires Mg(2+) as cofactor. Zn(2+) serves as cofactor.

It localises to the cytoplasm. The enzyme catalyses 1-(5-phospho-beta-D-ribosyl)-5'-AMP + H2O = 1-(5-phospho-beta-D-ribosyl)-5-[(5-phospho-beta-D-ribosylamino)methylideneamino]imidazole-4-carboxamide. Its pathway is amino-acid biosynthesis; L-histidine biosynthesis; L-histidine from 5-phospho-alpha-D-ribose 1-diphosphate: step 3/9. Its function is as follows. Catalyzes the hydrolysis of the adenine ring of phosphoribosyl-AMP. The chain is Phosphoribosyl-AMP cyclohydrolase from Pseudomonas syringae pv. syringae (strain B728a).